The sequence spans 271 residues: Interleukin-1 alpha (271 aa).

The propeptide occupies 1 to 112 (MAKVPDMFED…DSEEEIIKPR (112 aa)). K82 carries the N6-acetyllysine modification. Residues 82–86 (KKRRL) form a nuclear localization signal (NLS) region. Residue S87 is modified to Phosphoserine. 2 N-linked (GlcNAc...) asparagine glycosylation sites follow: N102 and N141.

Belongs to the IL-1 family. In terms of assembly, monomer. Interacts with TMED10; the interaction mediates the translocation from the cytoplasm into the ERGIC (endoplasmic reticulum-Golgi intermediate compartment) and thereby secretion. Interacts with IL1R1. Interacts with S100A13; this interaction is the first step in the export of IL1A, followed by direct translocation of this complex across the plasma membrane. Acetylated within its nuclear localization sequence, which impacts subcellular localization. In terms of processing, proteolytic processed by CAPN1 in a calcium-dependent manner. Cleavage from 31 kDa precursor to 18 kDa biologically active molecules. Post-translationally, phosphorylated. Phosphorylation greatly enhances susceptibility to digestion and promotes the conversion of pre-IL1A alpha to the biologically active IL1A.

It localises to the nucleus. The protein localises to the cytoplasm. It is found in the secreted. Its function is as follows. Cytokine constitutively present intracellularly in nearly all resting non-hematopoietic cells that plays an important role in inflammation and bridges the innate and adaptive immune systems. After binding to its receptor IL1R1 together with its accessory protein IL1RAP, forms the high affinity interleukin-1 receptor complex. Signaling involves the recruitment of adapter molecules such as MYD88, IRAK1 or IRAK4. In turn, mediates the activation of NF-kappa-B and the three MAPK pathways p38, p42/p44 and JNK pathways. Within the cell, acts as an alarmin and cell death results in its liberation in the extracellular space after disruption of the cell membrane to induce inflammation and alert the host to injury or damage. In addition to its role as a danger signal, which occurs when the cytokine is passively released by cell necrosis, directly senses DNA damage and acts as signal for genotoxic stress without loss of cell integrity. This Cercocebus atys (Sooty mangabey) protein is Interleukin-1 alpha (IL1A).